A 764-amino-acid chain; its full sequence is Mitogen-activated protein kinase kinase kinase 1b (764 aa).

Disordered regions lie at residues 1–81 (MVEE…IQQQ), 120–260 (KSIA…TATR), 325–348 (PNLA…SSAM), and 360–392 (VPEL…HYGS). Residues 14 to 30 (GSWGSGEDGGSSHGGKG) show a composition bias toward gly residues. Low complexity-rich tracts occupy residues 60–76 (VHST…LSKS) and 125–135 (SQPLSSPSLSQ). Residues 136 to 145 (EHGEASHSND) are compositionally biased toward basic and acidic residues. The span at 184-201 (YVNSQPQNHYGRKNSPSQ) shows a compositional bias: polar residues. The Protein kinase domain maps to 431–684 (WFKGDFIGSG…CDMLLTHPFI (254 aa)). ATP contacts are provided by residues 437–445 (IGSGTFGSV) and K459. The Proton acceptor role is filled by D554. The disordered stretch occupies residues 706–764 (EERSIDVSESPSIATSSQSGSSPSVAGDAVSPASVAVRPRSMRTLRSEFSMSSPESIAS). The span at 715 to 729 (SPSIATSSQSGSSPS) shows a compositional bias: low complexity. A compositionally biased stretch (polar residues) spans 752-764 (SEFSMSSPESIAS).

Belongs to the protein kinase superfamily. STE Ser/Thr protein kinase family. MAP kinase kinase kinase subfamily.

It localises to the cell membrane. It catalyses the reaction L-seryl-[protein] + ATP = O-phospho-L-seryl-[protein] + ADP + H(+). It carries out the reaction L-threonyl-[protein] + ATP = O-phospho-L-threonyl-[protein] + ADP + H(+). Its function is as follows. The CERK1, MEKK1a/b, MKK1a/b/c and MPK4a/b proteins are involved in pathogen defense. The pathway induces rapid growth inhibition, cell wall depositions and accumulation of defense-related transcripts. This protein is required for responses to chitin and acts redundantly with MEKK1a. This Physcomitrium patens (Spreading-leaved earth moss) protein is Mitogen-activated protein kinase kinase kinase 1b (MEKK1b).